The primary structure comprises 930 residues: Dual serine/threonine and tyrosine protein kinase (930 aa).

Positions 383-428 (RKENELYESLMNIANRKQEEMKDMIIETLSNMKEELLEDAANMEFK) form a coiled coil. The 255-residue stretch at 653–907 (PKLGRELGRG…PLLGIVQPML (255 aa)) folds into the Protein kinase domain. Residues 659 to 667 (LGRGQYGVV) and K682 each bind ATP. The Proton acceptor role is filled by D778.

Belongs to the protein kinase superfamily. Ser/Thr protein kinase family. In terms of tissue distribution, widely expressed with the highest expression in brain and ovary.

It localises to the cytoplasm. It is found in the cell membrane. Its subcellular location is the apical cell membrane. The protein resides in the basolateral cell membrane. The protein localises to the cell junction. It carries out the reaction L-seryl-[protein] + ATP = O-phospho-L-seryl-[protein] + ADP + H(+). The catalysed reaction is L-threonyl-[protein] + ATP = O-phospho-L-threonyl-[protein] + ADP + H(+). The enzyme catalyses L-tyrosyl-[protein] + ATP = O-phospho-L-tyrosyl-[protein] + ADP + H(+). Functionally, may act as a positive regulator of ERK phosphorylation downstream of fibroblast growth factor-receptor activation. May induce both caspase-dependent apoptosis and caspase-independent cell death. The polypeptide is Dual serine/threonine and tyrosine protein kinase (DSTYK) (Gallus gallus (Chicken)).